Consider the following 404-residue polypeptide: Bifunctional enzyme IspD/IspF (404 aa).

The tract at residues 1-243 is 2-C-methyl-D-erythritol 4-phosphate cytidylyltransferase; that stretch reads MQAEEQFSCG…KLTRMAIPDV (243 aa). The 2-C-methyl-D-erythritol 2,4-cyclodiphosphate synthase stretch occupies residues 244 to 404; that stretch reads RTGNGYDVHQ…TVVYASGGDA (161 aa). D250 and H252 together coordinate a divalent metal cation. 4-CDP-2-C-methyl-D-erythritol 2-phosphate contacts are provided by residues 250-252 and 276-277; these read DVH and HS. Position 284 (H284) interacts with a divalent metal cation. 4-CDP-2-C-methyl-D-erythritol 2-phosphate-binding positions include 298–300, 374–377, F381, and R384; these read DIG and TTNE.

The protein in the N-terminal section; belongs to the IspD/TarI cytidylyltransferase family. IspD subfamily. In the C-terminal section; belongs to the IspF family. A divalent metal cation is required as a cofactor.

The catalysed reaction is 2-C-methyl-D-erythritol 4-phosphate + CTP + H(+) = 4-CDP-2-C-methyl-D-erythritol + diphosphate. The enzyme catalyses 4-CDP-2-C-methyl-D-erythritol 2-phosphate = 2-C-methyl-D-erythritol 2,4-cyclic diphosphate + CMP. It participates in isoprenoid biosynthesis; isopentenyl diphosphate biosynthesis via DXP pathway; isopentenyl diphosphate from 1-deoxy-D-xylulose 5-phosphate: step 2/6. The protein operates within isoprenoid biosynthesis; isopentenyl diphosphate biosynthesis via DXP pathway; isopentenyl diphosphate from 1-deoxy-D-xylulose 5-phosphate: step 4/6. Bifunctional enzyme that catalyzes the formation of 4-diphosphocytidyl-2-C-methyl-D-erythritol from CTP and 2-C-methyl-D-erythritol 4-phosphate (MEP) (IspD), and catalyzes the conversion of 4-diphosphocytidyl-2-C-methyl-D-erythritol 2-phosphate (CDP-ME2P) to 2-C-methyl-D-erythritol 2,4-cyclodiphosphate (ME-CPP) with a corresponding release of cytidine 5-monophosphate (CMP) (IspF). The sequence is that of Bifunctional enzyme IspD/IspF from Sinorhizobium medicae (strain WSM419) (Ensifer medicae).